We begin with the raw amino-acid sequence, 497 residues long: Guanosine-5'-triphosphate,3'-diphosphate pyrophosphatase (497 aa).

This sequence belongs to the GppA/Ppx family. GppA subfamily.

It carries out the reaction guanosine 3'-diphosphate 5'-triphosphate + H2O = guanosine 3',5'-bis(diphosphate) + phosphate + H(+). It functions in the pathway purine metabolism; ppGpp biosynthesis; ppGpp from GTP: step 2/2. Catalyzes the conversion of pppGpp to ppGpp. Guanosine pentaphosphate (pppGpp) is a cytoplasmic signaling molecule which together with ppGpp controls the 'stringent response', an adaptive process that allows bacteria to respond to amino acid starvation, resulting in the coordinated regulation of numerous cellular activities. This chain is Guanosine-5'-triphosphate,3'-diphosphate pyrophosphatase, found in Pseudoalteromonas translucida (strain TAC 125).